The chain runs to 445 residues: Argininosuccinate synthase (445 aa).

ATP contacts are provided by residues 17–25 and Ala43; that span reads AFSGGLDTS. L-citrulline is bound at residue Tyr99. ATP-binding residues include Gly129 and Thr131. L-aspartate is bound by residues Thr131, Asn135, and Asp136. Asn135 serves as a coordination point for L-citrulline. Residue Asp136 participates in ATP binding. L-citrulline contacts are provided by Arg139 and Ser192. Residue Asp194 coordinates ATP. Thr201, Glu203, and Glu280 together coordinate L-citrulline.

Belongs to the argininosuccinate synthase family. Type 2 subfamily. In terms of assembly, homotetramer.

The protein resides in the cytoplasm. It catalyses the reaction L-citrulline + L-aspartate + ATP = 2-(N(omega)-L-arginino)succinate + AMP + diphosphate + H(+). The protein operates within amino-acid biosynthesis; L-arginine biosynthesis; L-arginine from L-ornithine and carbamoyl phosphate: step 2/3. The chain is Argininosuccinate synthase from Bordetella pertussis (strain Tohama I / ATCC BAA-589 / NCTC 13251).